A 348-amino-acid polypeptide reads, in one-letter code: Dihydroorotase (348 aa).

2 residues coordinate Zn(2+): His14 and His16. Substrate-binding positions include 16 to 18 (HLR) and Asn42. Residues Lys100, His137, and His175 each contribute to the Zn(2+) site. N6-carboxylysine is present on Lys100. His137 lines the substrate pocket. Leu220 lines the substrate pocket. Asp248 provides a ligand contact to Zn(2+). The active site involves Asp248. 2 residues coordinate substrate: His252 and Ala264.

Belongs to the metallo-dependent hydrolases superfamily. DHOase family. Class II DHOase subfamily. Homodimer. It depends on Zn(2+) as a cofactor.

It carries out the reaction (S)-dihydroorotate + H2O = N-carbamoyl-L-aspartate + H(+). It participates in pyrimidine metabolism; UMP biosynthesis via de novo pathway; (S)-dihydroorotate from bicarbonate: step 3/3. Catalyzes the reversible cyclization of carbamoyl aspartate to dihydroorotate. The polypeptide is Dihydroorotase (Ectopseudomonas mendocina (strain ymp) (Pseudomonas mendocina)).